A 267-amino-acid chain; its full sequence is Large ribosomal subunit protein uL2c (267 aa).

The protein belongs to the universal ribosomal protein uL2 family. Part of the 50S ribosomal subunit.

The protein localises to the plastid. Its subcellular location is the apicoplast. The polypeptide is Large ribosomal subunit protein uL2c (rpl2) (Toxoplasma gondii).